We begin with the raw amino-acid sequence, 460 residues long: Argininosuccinate lyase (460 aa).

Belongs to the lyase 1 family. Argininosuccinate lyase subfamily.

The protein localises to the cytoplasm. It carries out the reaction 2-(N(omega)-L-arginino)succinate = fumarate + L-arginine. The protein operates within amino-acid biosynthesis; L-arginine biosynthesis; L-arginine from L-ornithine and carbamoyl phosphate: step 3/3. The polypeptide is Argininosuccinate lyase (Maridesulfovibrio salexigens (strain ATCC 14822 / DSM 2638 / NCIMB 8403 / VKM B-1763) (Desulfovibrio salexigens)).